A 215-amino-acid chain; its full sequence is Dual specificity phosphatase 29 (215 aa).

The region spanning His-53–Lys-201 is the Tyrosine-protein phosphatase domain. A substrate-binding site is contributed by His-145–Arg-152. The Phosphocysteine intermediate role is filled by Cys-146.

The protein belongs to the protein-tyrosine phosphatase family. Non-receptor class dual specificity subfamily. In terms of assembly, homodimer. Interacts with PRKAA2.

The protein resides in the cytoplasm. It is found in the nucleus. It catalyses the reaction O-phospho-L-tyrosyl-[protein] + H2O = L-tyrosyl-[protein] + phosphate. The enzyme catalyses O-phospho-L-seryl-[protein] + H2O = L-seryl-[protein] + phosphate. The catalysed reaction is O-phospho-L-threonyl-[protein] + H2O = L-threonyl-[protein] + phosphate. Its function is as follows. Dual specificity phosphatase able to dephosphorylate phosphotyrosine, phosphoserine and phosphothreonine residues within the same substrate, with a preference for phosphotyrosine as a substrate. Involved in the modulation of intracellular signaling cascades. In skeletal muscle regulates systemic glucose homeostasis by activating, AMPK, an energy sensor protein kinase. Affects MAP kinase signaling though modulation of the MAPK1/2 cascade in skeletal muscle promoting muscle cell differentiation, development and atrophy. This Rattus norvegicus (Rat) protein is Dual specificity phosphatase 29 (Dusp29).